A 345-amino-acid chain; its full sequence is Delta(1)-pyrroline-2-carboxylate reductase (345 aa).

Serine 47 serves as the catalytic Charge relay system. The active-site Proton donor is histidine 48. Residue arginine 52 coordinates substrate. Position 121 to 125 (121 to 125 (HFSAL)) interacts with NADP(+). Threonine 161 provides a ligand contact to substrate. Position 179 to 181 (179 to 181 (DFA)) interacts with NADP(+). 187–188 (RG) contributes to the substrate binding site. The active-site Charge relay system is the glutamate 189. NADP(+) is bound by residues 230-231 (HK) and 305-311 (RLPSGRR).

Belongs to the LDH2/MDH2 oxidoreductase family. Homodimer.

The enzyme catalyses L-proline + NAD(+) = 1-pyrroline-2-carboxylate + NADH + H(+). It carries out the reaction L-proline + NADP(+) = 1-pyrroline-2-carboxylate + NADPH + H(+). In terms of biological role, catalyzes the reduction of Delta(1)-pyrroline-2-carboxylate (Pyr2C) to L-proline, using NADPH as the electron donor. Is likely involved in a degradation pathway that converts trans-3-hydroxy-L-proline (t3LHyp) to L-proline, which would allow A.tumefaciens to grow on t3LHyp as a sole carbon source. The polypeptide is Delta(1)-pyrroline-2-carboxylate reductase (Agrobacterium fabrum (strain C58 / ATCC 33970) (Agrobacterium tumefaciens (strain C58))).